The chain runs to 302 residues: 1D-myo-inositol 2-acetamido-2-deoxy-alpha-D-glucopyranoside deacetylase (302 aa).

Zn(2+) contacts are provided by His13, Asp16, and His155.

It belongs to the MshB deacetylase family. Requires Zn(2+) as cofactor.

It catalyses the reaction 1D-myo-inositol 2-acetamido-2-deoxy-alpha-D-glucopyranoside + H2O = 1D-myo-inositol 2-amino-2-deoxy-alpha-D-glucopyranoside + acetate. In terms of biological role, catalyzes the deacetylation of 1D-myo-inositol 2-acetamido-2-deoxy-alpha-D-glucopyranoside (GlcNAc-Ins) in the mycothiol biosynthesis pathway. The chain is 1D-myo-inositol 2-acetamido-2-deoxy-alpha-D-glucopyranoside deacetylase from Nocardioides sp. (strain ATCC BAA-499 / JS614).